Here is a 301-residue protein sequence, read N- to C-terminus: Olfactory receptor 10AG1 (301 aa).

The Extracellular segment spans residues 1–16 (MEFVLLGFSDIPNLHW). Residues 17 to 37 (MLFSIFLLMYLMILMCNGIII) traverse the membrane as a helical segment. Residues 38 to 45 (LLIKIHPA) lie on the Cytoplasmic side of the membrane. Residues 46–66 (LQTPMYFFLSNFSLLEICYVT) form a helical membrane-spanning segment. The Extracellular segment spans residues 67–90 (IIIPRMLMDIWTQKGNISLFACAT). A glycan (N-linked (GlcNAc...) asparagine) is linked at Asn82. A disulfide bond links Cys88 and Cys180. Residues 91–111 (QMCFFLMLGGTECLLLTVMAY) form a helical membrane-spanning segment. Residues 112–130 (DRYVAICKPLQYPLVMNHK) lie on the Cytoplasmic side of the membrane. The chain crosses the membrane as a helical span at residues 131–151 (VCIQLIIASWTITIPVVIGET). Topologically, residues 152-188 (CQIFLLPFCGTNTINHFFCDIPPILKLACGNIFVNEI) are extracellular. Residues 189 to 208 (TVHVVAVVFITVPFLLIVVS) traverse the membrane as a helical segment. Residues 209 to 228 (YGKIISNILKLSSARGKAKA) lie on the Cytoplasmic side of the membrane. A helical membrane pass occupies residues 229-249 (FSTCSSHLIVVILFFGAGTIT). Residues 250–262 (YLQPKPHQFQRMG) lie on the Extracellular side of the membrane. A helical transmembrane segment spans residues 263–283 (KLISLFYTILIPTLNPIIYTL). Over 284–301 (RNKDIMVALRKLLAKLLT) the chain is Cytoplasmic.

The protein belongs to the G-protein coupled receptor 1 family.

The protein localises to the cell membrane. Functionally, odorant receptor. The sequence is that of Olfactory receptor 10AG1 (OR10AG1) from Homo sapiens (Human).